Here is a 332-residue protein sequence, read N- to C-terminus: tRNA U34 carboxymethyltransferase (332 aa).

Residues Lys96, Trp110, Lys115, Gly135, 157–159 (DPT), 190–191 (IE), Met205, Tyr209, and Arg324 each bind carboxy-S-adenosyl-L-methionine.

This sequence belongs to the class I-like SAM-binding methyltransferase superfamily. CmoB family. As to quaternary structure, homotetramer.

It carries out the reaction carboxy-S-adenosyl-L-methionine + 5-hydroxyuridine(34) in tRNA = 5-carboxymethoxyuridine(34) in tRNA + S-adenosyl-L-homocysteine + H(+). Its function is as follows. Catalyzes carboxymethyl transfer from carboxy-S-adenosyl-L-methionine (Cx-SAM) to 5-hydroxyuridine (ho5U) to form 5-carboxymethoxyuridine (cmo5U) at position 34 in tRNAs. The chain is tRNA U34 carboxymethyltransferase from Alteromonas mediterranea (strain DSM 17117 / CIP 110805 / LMG 28347 / Deep ecotype).